An 847-amino-acid chain; its full sequence is Lethal(3)malignant brain tumor-like protein 1 (847 aa).

2 stretches are compositionally biased toward basic and acidic residues: residues 65 to 82 (FPRE…EKGV) and 144 to 155 (AVKEGHAKKDGD). Disordered stretches follow at residues 65–87 (FPRE…SEPI), 142–163 (AEAV…PTSR), and 237–296 (VKKR…SEEK). MBT repeat units lie at residues 300 to 400 (WSWA…LQPP), 408 to 507 (FSWT…LTPP), and 516 to 611 (FIWE…LQPP). The segment at 473 to 480 (FDNWDDTY) is interaction with monomethylated and dimethylated peptides. The CCHHC-type zinc-finger motif lies at 639–682 (SKYSFHHRKCPTPGCDGSGHVTGRFTAHYCLSGCPLAEKNQGKL). Residues cysteine 648, cysteine 653, histidine 666, and cysteine 672 each coordinate Zn(2+). The SAM domain maps to 778 to 842 (WTIDEVFSFV…YNAILMFKNA (65 aa)).

As to quaternary structure, homodimer.

Its subcellular location is the nucleus. Functionally, polycomb group (PcG) protein that specifically recognizes and binds mono- and dimethyllysine residues on target proteins, thereby acting as a 'reader' of a network of post-translational modifications. PcG proteins maintain the transcriptionally repressive state of genes: acts as a chromatin compaction factor by recognizing and binding mono- and dimethylated histone H1b/H1-4 at 'Lys-26' (H1bK26me1 and H1bK26me2) and histone H4 at 'Lys-20' (H4K20me1 and H4K20me2), leading to condense chromatin and repress transcription. This is Lethal(3)malignant brain tumor-like protein 1 (L3MBTL1) from Gallus gallus (Chicken).